We begin with the raw amino-acid sequence, 156 residues long: SsrA-binding protein (156 aa).

This sequence belongs to the SmpB family.

It is found in the cytoplasm. Required for rescue of stalled ribosomes mediated by trans-translation. Binds to transfer-messenger RNA (tmRNA), required for stable association of tmRNA with ribosomes. tmRNA and SmpB together mimic tRNA shape, replacing the anticodon stem-loop with SmpB. tmRNA is encoded by the ssrA gene; the 2 termini fold to resemble tRNA(Ala) and it encodes a 'tag peptide', a short internal open reading frame. During trans-translation Ala-aminoacylated tmRNA acts like a tRNA, entering the A-site of stalled ribosomes, displacing the stalled mRNA. The ribosome then switches to translate the ORF on the tmRNA; the nascent peptide is terminated with the 'tag peptide' encoded by the tmRNA and targeted for degradation. The ribosome is freed to recommence translation, which seems to be the essential function of trans-translation. The protein is SsrA-binding protein of Bacillus pumilus (strain SAFR-032).